The chain runs to 198 residues: uncharacterized protein (198 aa).

The HTH tetR-type domain maps to 11–71; the sequence is EGTHKAILSA…DSFLSTATDR (61 aa). The H-T-H motif DNA-binding region spans 34–53; that stretch reads TVDKIAERAKVSKATIYKWW.

This is an uncharacterized protein from Bacillus subtilis (strain 168).